A 348-amino-acid chain; its full sequence is Putative agmatine deiminase (348 aa).

C335 functions as the Amidino-cysteine intermediate in the catalytic mechanism.

The protein belongs to the agmatine deiminase family.

The catalysed reaction is agmatine + H2O = N-carbamoylputrescine + NH4(+). The protein is Putative agmatine deiminase of Legionella pneumophila subsp. pneumophila (strain Philadelphia 1 / ATCC 33152 / DSM 7513).